A 532-amino-acid polypeptide reads, in one-letter code: Arginine--tRNA ligase (532 aa).

The 'HIGH' region motif lies at alanine 122 to serine 132.

This sequence belongs to the class-I aminoacyl-tRNA synthetase family. In terms of assembly, monomer.

The protein resides in the cytoplasm. It carries out the reaction tRNA(Arg) + L-arginine + ATP = L-arginyl-tRNA(Arg) + AMP + diphosphate. In Elusimicrobium minutum (strain Pei191), this protein is Arginine--tRNA ligase.